The sequence spans 682 residues: Potassium-transporting ATPase ATP-binding subunit (682 aa).

4 helical membrane-spanning segments follow: residues 44–64 (VMAV…SGHG), 66–86 (AGFG…GNFA), 233–253 (LTFL…GVTL), and 257–277 (LLIA…LPAI). Residue Asp-310 is the 4-aspartylphosphate intermediate of the active site. ATP contacts are provided by residues Asp-347, Glu-351, 377-384 (FTAQTRMS), and Lys-395. Residues Asp-518 and Asp-522 each coordinate Mg(2+). A run of 3 helical transmembrane segments spans residues 588-608 (FAIL…LNVM), 616-636 (AVLA…PLAL), and 658-678 (GLGG…ALVA).

It belongs to the cation transport ATPase (P-type) (TC 3.A.3) family. Type IA subfamily. The system is composed of three essential subunits: KdpA, KdpB and KdpC.

It is found in the cell inner membrane. The enzyme catalyses K(+)(out) + ATP + H2O = K(+)(in) + ADP + phosphate + H(+). Part of the high-affinity ATP-driven potassium transport (or Kdp) system, which catalyzes the hydrolysis of ATP coupled with the electrogenic transport of potassium into the cytoplasm. This subunit is responsible for energy coupling to the transport system and for the release of the potassium ions to the cytoplasm. This Xanthomonas campestris pv. campestris (strain ATCC 33913 / DSM 3586 / NCPPB 528 / LMG 568 / P 25) protein is Potassium-transporting ATPase ATP-binding subunit.